The primary structure comprises 753 residues: LIM domain and actin-binding protein 1 (753 aa).

Position 1 is an N-acetylmethionine (Met1). Ser15 is subject to Phosphoserine. Basic and acidic residues predominate over residues 46 to 56 (EEANMERKKNN). Disordered regions lie at residues 46–66 (EEAN…HFRR) and 82–186 (GAEF…TSGK). Ser132 bears the Phosphoserine mark. The span at 143 to 152 (PRSENSHDFK) shows a compositional bias: basic and acidic residues. The Required for interaction with NPC1L1 motif lies at 164–166 (CLG). A compositionally biased stretch (basic and acidic residues) spans 167–177 (DSRHEAEKPET). Ser225, Ser230, Ser242, and Ser263 each carry phosphoserine. Disordered regions lie at residues 276–326 (AAVS…VSTT) and 341–379 (TCNS…TAKK). Residues 278–291 (VSKQSSPASYTNEL) are compositionally biased toward polar residues. Positions 292 to 305 (KTSESKTHKWEQKE) are enriched in basic and acidic residues. A compositionally biased stretch (polar residues) spans 342–351 (CNSQVKSEAQ). 4 positions are modified to phosphoserine: Ser348, Ser360, Ser367, and Ser372. Over residues 363-375 (ARTSSLPESSPSK) the composition is skewed to polar residues. An LIM zinc-binding domain is found at 386-446 (ESCVECQKTV…KPHFNQLFKS (61 aa)). Lys437 is modified (N6-succinyllysine). Residues Ser467, Ser485, and Ser488 each carry the phosphoserine modification. Disordered regions lie at residues 467-493 (SDNE…GVED), 505-669 (SMEA…FELE), and 682-703 (EDDN…GWSG). Positions 491–511 (VEDAPIAKVGVLAASMEAKAS) are required for interaction with MYO5B. 2 stretches are compositionally biased toward basic and acidic residues: residues 512-525 (SQRE…ETKK) and 554-565 (WPPEDDVCKTEA). Positions 598–609 (SSIKSPKASSPS) are enriched in low complexity. Ser599, Ser602, Ser607, and Ser615 each carry phosphoserine. Residues 630–666 (MERKQTENARPSGEKENVGKSRWQGEEVPRSKDRSSF) are compositionally biased toward basic and acidic residues. Phosphoserine is present on residues Ser692, Ser720, and Ser735.

In terms of assembly, interacts with NPC1L1; bridges NPC1L1 with MYO5B. Interacts with MYO5B; bridges MYO5B with NPC1L1. Interacts with PXN; this complex stabilizes actin dynamics. Binds to G-actin and F-actin. Interacts with LUZP1 (via C-terminus); both proteins restrict ciliation and may work together to regulate this process. Binds RAB40B (GTP-bound); interaction influences LIMA1 subcellular localization in lamellipodia during cell migration. Phosphorylation of the C-terminal region by MAPK1/MAPK3 reduces its association with F-actin and contributes to actin filament reorganization and enhances cell motility. In terms of processing, ubiquitinated by the ECS(RAB40B) complex leading to its degradation. In terms of tissue distribution, highly expressed in the small intestine, including the duodenum, jejunum, and ileum. Low expression in the liver and very low expressed in the heart, spleen, lung, brain, and pancreas. Isoform Alpha is highly expressed in embryos from day 7-11 and in adult spleen and lung. Isoform Beta expression is highest in adult kidney, testis, lung and liver, intermediate in heart, brain, spleen, skeletal muscle and low in embryos.

The protein localises to the cytoplasm. Its subcellular location is the cell junction. It is found in the focal adhesion. The protein resides in the cytoskeleton. It localises to the stress fiber. The protein localises to the cell membrane. Its subcellular location is the cell projection. It is found in the ruffle. The protein resides in the lamellipodium. Actin-binding protein involved in actin cytoskeleton regulation and dynamics. Increases the number and size of actin stress fibers and inhibits membrane ruffling. Inhibits actin filament depolymerization. Bundles actin filaments, delays filament nucleation and reduces formation of branched filaments. Acts as a negative regulator of primary cilium formation. Plays a role in cholesterol homeostasis. Influences plasma cholesterol levels through regulation of intestinal cholesterol absorption. May act as a scaffold protein by regulating NPC1L1 transportation, an essential protein for cholesterol absorption, to the plasma membrane by recruiting MYO5B to NPC1L1, and thus facilitates cholesterol uptake. This Mus musculus (Mouse) protein is LIM domain and actin-binding protein 1 (Lima1).